The primary structure comprises 310 residues: Olfactory receptor 5H14 (310 aa).

Over 1–28 the chain is Extracellular; the sequence is MEEENATLLTEFVLTGFLYQPQWKIPLF. A glycan (N-linked (GlcNAc...) asparagine) is linked at asparagine 5. A helical membrane pass occupies residues 29-49; it reads LAFLVIYLITIMGNLGLIAVI. The Cytoplasmic portion of the chain corresponds to 50-56; sequence WKDPHLH. A helical transmembrane segment spans residues 57–77; it reads IPMYLLLGNLAFVDALLSSSV. Residues 78-98 lie on the Extracellular side of the membrane; the sequence is TLKMLINFLAKSKMISLSECK. Cysteine 97 and cysteine 179 form a disulfide bridge. The helical transmembrane segment at 99-119 threads the bilayer; it reads IQLFSFAISVTTECFLLATMA. Over 120–143 the chain is Cytoplasmic; the sequence is YDRYVAICKPLLYPAIMTNGLCIR. Residues 144–164 form a helical membrane-spanning segment; that stretch reads LLILSYVGGLLHALIHEGFLF. The Extracellular portion of the chain corresponds to 165–195; sequence RLTFCNSNIIQHFYCDIIPLLKISYTDSSIN. A helical membrane pass occupies residues 196 to 216; that stretch reads FLMVFIFAGSIQVFTIGTVLI. The Cytoplasmic segment spans residues 217–240; it reads SYIFVLYTILKKKSVKGMRKAFST. A helical transmembrane segment spans residues 241-261; it reads CGAHLLSVSLYYGPLAFMYMG. At 262 to 271 the chain is on the extracellular side; the sequence is SASPQADDQD. Residues 272–292 traverse the membrane as a helical segment; the sequence is MMESLFYTVIVPLLNPMIYSL. The Cytoplasmic portion of the chain corresponds to 293–310; it reads RNKQVIASFTKMFKRNDV.

The protein belongs to the G-protein coupled receptor 1 family.

It is found in the cell membrane. Its function is as follows. Odorant receptor. In Homo sapiens (Human), this protein is Olfactory receptor 5H14 (OR5H14).